The primary structure comprises 126 residues: Actin-depolymerizing factor (126 aa).

Residues 1–126 enclose the ADF-H domain; the sequence is EDNCKLKFLE…SFDIIKSRAL (126 aa).

The protein belongs to the actin-binding proteins ADF family. As to expression, preferentially in mature anther.

Actin-depolymerizing protein. Severs actin filaments (F-actin) and binds to actin monomers. In Brassica napus (Rape), this protein is Actin-depolymerizing factor.